The chain runs to 123 residues: Small ribosomal subunit protein uS12 (123 aa).

Asp89 is modified (3-methylthioaspartic acid).

This sequence belongs to the universal ribosomal protein uS12 family. In terms of assembly, part of the 30S ribosomal subunit. Contacts proteins S8 and S17. May interact with IF1 in the 30S initiation complex.

With S4 and S5 plays an important role in translational accuracy. In terms of biological role, interacts with and stabilizes bases of the 16S rRNA that are involved in tRNA selection in the A site and with the mRNA backbone. Located at the interface of the 30S and 50S subunits, it traverses the body of the 30S subunit contacting proteins on the other side and probably holding the rRNA structure together. The combined cluster of proteins S8, S12 and S17 appears to hold together the shoulder and platform of the 30S subunit. This chain is Small ribosomal subunit protein uS12, found in Bartonella bacilliformis (strain ATCC 35685 / KC583 / Herrer 020/F12,63).